We begin with the raw amino-acid sequence, 218 residues long: MARKGILGTKLGMTQVFDENNKVVPVTVVKAGPNVVTRIRTPERDGYSAVQLAYGEISPRKVNKPVTGQYAAAGVNPRRHLAELRLDDEAAAAEYEVGQELTAEIFADGAYVDVTGTSKGKGFAGTMKRHGFRGQGASHGAQAVHRRPGSIGGCATPGRVFKGTRMSGRMGSDRVTTQNLKVHKVDAENGVLLIKGAIPGRNGGLVVVRSAIKRGEKA.

The tract at residues 133 to 158 is disordered; sequence RGQGASHGAQAVHRRPGSIGGCATPG.

The protein belongs to the universal ribosomal protein uL3 family. As to quaternary structure, part of the 50S ribosomal subunit. Forms a cluster with proteins L14 and L19.

One of the primary rRNA binding proteins, it binds directly near the 3'-end of the 23S rRNA, where it nucleates assembly of the 50S subunit. The polypeptide is Large ribosomal subunit protein uL3 (Mycolicibacterium vanbaalenii (strain DSM 7251 / JCM 13017 / BCRC 16820 / KCTC 9966 / NRRL B-24157 / PYR-1) (Mycobacterium vanbaalenii)).